Consider the following 289-residue polypeptide: Acetylglutamate kinase (289 aa).

Residues 60 to 61 (GG), arginine 82, and asparagine 182 contribute to the substrate site.

It belongs to the acetylglutamate kinase family. ArgB subfamily.

Its subcellular location is the cytoplasm. The catalysed reaction is N-acetyl-L-glutamate + ATP = N-acetyl-L-glutamyl 5-phosphate + ADP. The protein operates within amino-acid biosynthesis; L-arginine biosynthesis; N(2)-acetyl-L-ornithine from L-glutamate: step 2/4. Its function is as follows. Catalyzes the ATP-dependent phosphorylation of N-acetyl-L-glutamate. In Methanothrix thermoacetophila (strain DSM 6194 / JCM 14653 / NBRC 101360 / PT) (Methanosaeta thermophila), this protein is Acetylglutamate kinase.